Here is a 252-residue protein sequence, read N- to C-terminus: Triosephosphate isomerase (252 aa).

9 to 11 (NWK) is a substrate binding site. Catalysis depends on H100, which acts as the Electrophile. The active-site Proton acceptor is E171. Substrate-binding positions include G177, S216, and 237 to 238 (GG).

The protein belongs to the triosephosphate isomerase family. As to quaternary structure, homodimer.

It is found in the cytoplasm. The enzyme catalyses D-glyceraldehyde 3-phosphate = dihydroxyacetone phosphate. Its pathway is carbohydrate biosynthesis; gluconeogenesis. It participates in carbohydrate degradation; glycolysis; D-glyceraldehyde 3-phosphate from glycerone phosphate: step 1/1. In terms of biological role, involved in the gluconeogenesis. Catalyzes stereospecifically the conversion of dihydroxyacetone phosphate (DHAP) to D-glyceraldehyde-3-phosphate (G3P). This chain is Triosephosphate isomerase, found in Polynucleobacter necessarius subsp. necessarius (strain STIR1).